A 467-amino-acid polypeptide reads, in one-letter code: Proton extrusion protein PxcA (467 aa).

Over residues 146 to 161 (SQVRTTSSQPPENPSL) the composition is skewed to polar residues. 2 disordered regions span residues 146–167 (SQVR…ALRT) and 186–205 (PQLI…KADT). Residues 191–203 (QRTEQSKKSRGKA) are compositionally biased toward basic and acidic residues. 4 helical membrane passes run 249–269 (FILL…ALIV), 352–372 (IFSV…IMVL), 391–411 (IIIL…WEVI), and 427–447 (FIFL…KYWI).

The protein belongs to the CemA family.

It localises to the cell inner membrane. In terms of biological role, required for H(+) efflux immediately after light irradiation to form a rapid H(+) concentration gradient across the thylakoid membranes. Together with PxcL, contributes to transient H(+) uptake following dark to light transition. This is Proton extrusion protein PxcA from Nostoc sp. (strain PCC 7120 / SAG 25.82 / UTEX 2576).